A 155-amino-acid polypeptide reads, in one-letter code: Rusticyanin (155 aa).

A Plastocyanin-like domain is found at 53-155 (SFEVHDKKNP…TGMFGKIIVK (103 aa)). Cu cation-binding residues include H85, C138, H143, and M148.

In terms of assembly, monomer. Cu cation serves as cofactor.

It localises to the periplasm. Functionally, electron carrier from cytochrome c552 to the A-type oxidase. The chain is Rusticyanin (rus) from Acidithiobacillus ferrooxidans (Thiobacillus ferrooxidans).